Reading from the N-terminus, the 358-residue chain is Homoserine O-acetyltransferase (358 aa).

The 303-residue stretch at 41-343 folds into the AB hydrolase-1 domain; that stretch reads NAVLICHALT…DYGHDAFLVD (303 aa). The active-site Nucleophile is Ser143. Arg212 contacts substrate. Active-site residues include Asp304 and His337. Residue Asp338 coordinates substrate.

As to quaternary structure, homodimer.

It localises to the cytoplasm. It catalyses the reaction L-homoserine + acetyl-CoA = O-acetyl-L-homoserine + CoA. Its pathway is amino-acid biosynthesis; L-methionine biosynthesis via de novo pathway; O-acetyl-L-homoserine from L-homoserine: step 1/1. In terms of biological role, transfers an acetyl group from acetyl-CoA to L-homoserine, forming acetyl-L-homoserine. Utilizes a ping-pong kinetic mechanism in which the acetyl group of acetyl-CoA is initially transferred to the enzyme to form an acetyl-enzyme intermediate before subsequent transfer to homoserine to form the final product, O-acetylhomoserine. The polypeptide is Homoserine O-acetyltransferase (Haemophilus influenzae (strain ATCC 51907 / DSM 11121 / KW20 / Rd)).